Reading from the N-terminus, the 255-residue chain is Pimeloyl-[acyl-carrier protein] methyl ester esterase (255 aa).

An AB hydrolase-1 domain is found at 16 to 242; sequence LVLLHGWGLN…AAHAPFISHP (227 aa). Residues Trp22, 82–83, and 143–147 each bind substrate; these read SL and FLALQ. Catalysis depends on Ser82, which acts as the Nucleophile. Residues Asp207 and His235 contribute to the active site. His235 contributes to the substrate binding site.

Belongs to the AB hydrolase superfamily. Carboxylesterase BioH family. Monomer.

Its subcellular location is the cytoplasm. The catalysed reaction is 6-carboxyhexanoyl-[ACP] methyl ester + H2O = 6-carboxyhexanoyl-[ACP] + methanol + H(+). It functions in the pathway cofactor biosynthesis; biotin biosynthesis. The physiological role of BioH is to remove the methyl group introduced by BioC when the pimeloyl moiety is complete. It allows to synthesize pimeloyl-ACP via the fatty acid synthetic pathway through the hydrolysis of the ester bonds of pimeloyl-ACP esters. In Pectobacterium atrosepticum (strain SCRI 1043 / ATCC BAA-672) (Erwinia carotovora subsp. atroseptica), this protein is Pimeloyl-[acyl-carrier protein] methyl ester esterase.